We begin with the raw amino-acid sequence, 449 residues long: Probable magnetosome protein Mms48 (449 aa).

Residues 1–18 (MLLRLIVLLIFMSPVVFA) form the signal peptide. A helical membrane pass occupies residues 40-60 (SNMPVLLAVILVVFLIFSALS). The stretch at 323–356 (PDGHLAAGEAAFAVQKWGVARRHIMAALKIAPDA) is one TPR repeat.

The protein resides in the magnetosome membrane. Overexpression in wild-type cells increases the number of cells with double magnetosome chains significantly. The 4 genes of this operon collectively influence magnetosome size and number. This Magnetospirillum gryphiswaldense (strain DSM 6361 / JCM 21280 / NBRC 15271 / MSR-1) protein is Probable magnetosome protein Mms48.